Here is a 66-residue protein sequence, read N- to C-terminus: Large ribosomal subunit protein bL35 (66 aa).

The span at 1-16 (MPKQKTHRASAKRFKR) shows a compositional bias: basic residues. Residues 1-20 (MPKQKTHRASAKRFKRTGSG) are disordered.

Belongs to the bacterial ribosomal protein bL35 family.

The sequence is that of Large ribosomal subunit protein bL35 from Streptococcus thermophilus (strain CNRZ 1066).